A 360-amino-acid chain; its full sequence is Peptide chain release factor 1 (360 aa).

Residue Gln235 is modified to N5-methylglutamine.

It belongs to the prokaryotic/mitochondrial release factor family. Post-translationally, methylated by PrmC. Methylation increases the termination efficiency of RF1.

It localises to the cytoplasm. Peptide chain release factor 1 directs the termination of translation in response to the peptide chain termination codons UAG and UAA. The sequence is that of Peptide chain release factor 1 from Burkholderia cenocepacia (strain ATCC BAA-245 / DSM 16553 / LMG 16656 / NCTC 13227 / J2315 / CF5610) (Burkholderia cepacia (strain J2315)).